A 255-amino-acid chain; its full sequence is tRNA pseudouridine synthase A (255 aa).

Asp-56 (nucleophile) is an active-site residue. A substrate-binding site is contributed by Tyr-114.

It belongs to the tRNA pseudouridine synthase TruA family. Homodimer.

It carries out the reaction uridine(38/39/40) in tRNA = pseudouridine(38/39/40) in tRNA. Functionally, formation of pseudouridine at positions 38, 39 and 40 in the anticodon stem and loop of transfer RNAs. This is tRNA pseudouridine synthase A from Methylacidiphilum infernorum (isolate V4) (Methylokorus infernorum (strain V4)).